A 92-amino-acid chain; its full sequence is Long neurotoxin 1 (92 aa).

A signal peptide spans 1-21 (MKTLLLTLVVVTIVCLDLGYT). Intrachain disulfides connect Cys-24-Cys-42, Cys-35-Cys-63, Cys-48-Cys-52, Cys-67-Cys-79, and Cys-80-Cys-85.

This sequence belongs to the three-finger toxin family. Long-chain subfamily. Type II alpha-neurotoxin sub-subfamily. In terms of tissue distribution, expressed by the venom gland.

It localises to the secreted. In terms of biological role, binds with high affinity to muscular (alpha-1/CHRNA1) and neuronal (alpha-7/CHRNA7) nicotinic acetylcholine receptor (nAChR) and inhibits acetylcholine from binding to the receptor, thereby impairing neuromuscular and neuronal transmission. The sequence is that of Long neurotoxin 1 from Oxyuranus microlepidotus (Inland taipan).